Reading from the N-terminus, the 839-residue chain is MRRQVKKVLREKADDSMKPGWDVYQPSNDVVYAFNHYMQGSQIDAEAREKAEKAFQEAVKKHPFHNNADHAVDFHGTTVFRNAKGKVCGVLIPKALPSFATSMAADVLECAVARTSLRSALFGGVSPNSGIAGYFDYRGTPVELKCRKTSFTYEHTKEWRSVFPMIDYTSAIYKAALPDHWKAQDAAVPDVVRIHGSPFSTLTVNERFRTASHTDNGDFDNGYGVLAVLKGEYSGLSLALDDYGVCFNMQPTDVLLFDTHLFHSNTELEAKEANATWNRLSCVFYYRAALGEQPCVEEYRRRLKKAKEEKSTSLSFNHIEQKDNGENTNKPAPVYPVPLTPFSCAASAWALRGCAAAMLTRLHGLVRENASLMTELFGEPVEVADGLPRRAPEEIIPVHKHTNVQMHYLGGFSEKGDILNEAMNKRHYLDKENLQKMFGEEFVNIWTQSRTHWLQLVKKEWEHQKETNPTRTRFSWNNTSAMNFAFFDLCDVAKQLMCGAFGDREVNKKEEQSFWGMFAAHLDNACINEIGMLQGSMGMHKLNVKLKDYNFGGTRYLKDMPPEEQERRRRRRLEIEQARRRAPICNSESGDWLRNEAFDYQTEDVAVNYEREQWITPENNAKRFGFPERGVYGAEGAATGTISVLIVLPKPTNHRQKTCELPTSREADRIMKNPAAQRLLCAKPCNIGLSTSSNKSRTVLCGNIRIDKVFDGGSVGGKMYDFVIMRHLLAATTGEREPLECLVRWTSLARYCTFVVEVDLLDRHHYILKSEIGEEYSAVSEICFSALYSATYARDKVNLRTTPCLLSFIDKSGNMLESRFKFNGSPLNTVAFVVRRREK.

The thymine dioxygenase stretch occupies residues 86-288 (KVCGVLIPKA…RLSCVFYYRA (203 aa)). The Fe cation site is built by His213, Asp215, and His263. Arg279 contacts 2-oxoglutarate. Residues 415-583 (KGDILNEAMN…EIEQARRRAP (169 aa)) are DNA-binding JBP1 domain.

The protein belongs to the TET family. JBP1 subfamily. As to quaternary structure, monomer. Binds to DNA as a monomer. It depends on Fe(2+) as a cofactor.

The protein resides in the nucleus. The enzyme catalyses thymine + 2-oxoglutarate + O2 = 5-hydroxymethyluracil + succinate + CO2. Functionally, dioxygenase that catalyzes the first step of DNA base J (beta-d-glucosyl-HOMedU) biosynthesis by converting thymine to 5-hydroxymethyluracil (HOMedU). DNA base J is a hypermodified thymidine residue found in the genome of kinetoplastid parasites, which is localized primarily to repetitive DNA, namely the telomeres, and is implicated in the regulation of antigenic variation. Also specifically binds to base J-containing DNA (J-DNA). Involved in propagation and maintenance of DNA base J synthesis initiated by JBP2 by specifically binding already synthesized DNA base J and propagating J synthesis. Thymine dioxygenase activity and J-DNA-binding are independent functions. In Trypanosoma brucei brucei, this protein is Thymine dioxygenase JBP1 (JBP1).